The primary structure comprises 438 residues: Aspartate--tRNA(Asp/Asn) ligase (438 aa).

Glu-176 serves as a coordination point for L-aspartate. The aspartate stretch occupies residues 198–201 (QLYK). Arg-220 lines the L-aspartate pocket. ATP contacts are provided by residues 220 to 222 (RAE), 228 to 230 (RHL), and Glu-361. The Mg(2+) site is built by Glu-361 and Ser-364. Positions 364 and 368 each coordinate L-aspartate. ATP is bound at residue 409-412 (GADR).

This sequence belongs to the class-II aminoacyl-tRNA synthetase family. Type 2 subfamily. As to quaternary structure, homodimer. It depends on Mg(2+) as a cofactor.

Its subcellular location is the cytoplasm. It catalyses the reaction tRNA(Asx) + L-aspartate + ATP = L-aspartyl-tRNA(Asx) + AMP + diphosphate. Its function is as follows. Aspartyl-tRNA synthetase with relaxed tRNA specificity since it is able to aspartylate not only its cognate tRNA(Asp) but also tRNA(Asn). Reaction proceeds in two steps: L-aspartate is first activated by ATP to form Asp-AMP and then transferred to the acceptor end of tRNA(Asp/Asn). The chain is Aspartate--tRNA(Asp/Asn) ligase from Methanococcus maripaludis (strain C5 / ATCC BAA-1333).